A 101-amino-acid polypeptide reads, in one-letter code: Small ribosomal subunit protein uS10 (101 aa).

This sequence belongs to the universal ribosomal protein uS10 family. In terms of assembly, part of the 30S ribosomal subunit.

Its function is as follows. Involved in the binding of tRNA to the ribosomes. This chain is Small ribosomal subunit protein uS10, found in Flavobacterium psychrophilum (strain ATCC 49511 / DSM 21280 / CIP 103535 / JIP02/86).